The following is a 249-amino-acid chain: Octanoyltransferase (249 aa).

The disordered stretch occupies residues 1-23 (MVNSPQNPRQDQRQDLDLTSFSA). One can recognise a BPL/LPL catalytic domain in the interval 57–241 (GEAPELVWLL…AFEELFGPTR (185 aa)). Residues 95–102 (RGGQLTYH), 170–172 (AIG), and 183–185 (GIA) each bind substrate. The active-site Acyl-thioester intermediate is C201.

This sequence belongs to the LipB family.

Its subcellular location is the cytoplasm. It carries out the reaction octanoyl-[ACP] + L-lysyl-[protein] = N(6)-octanoyl-L-lysyl-[protein] + holo-[ACP] + H(+). Its pathway is protein modification; protein lipoylation via endogenous pathway; protein N(6)-(lipoyl)lysine from octanoyl-[acyl-carrier-protein]: step 1/2. In terms of biological role, catalyzes the transfer of endogenously produced octanoic acid from octanoyl-acyl-carrier-protein onto the lipoyl domains of lipoate-dependent enzymes. Lipoyl-ACP can also act as a substrate although octanoyl-ACP is likely to be the physiological substrate. This is Octanoyltransferase from Bradyrhizobium diazoefficiens (strain JCM 10833 / BCRC 13528 / IAM 13628 / NBRC 14792 / USDA 110).